The chain runs to 476 residues: MNFETVIGLEVHVELKTNSKIFSSAPAHFGAEPNSNTNVVDWSYPGVLPVMNKGALEFGMKAALALNCEISKETHFDRKNYFYPDNPKAYQISQFDQPIGHDGWIEIEVEGKKKKIRIERVHLEEDAGKNIHGTDGYSYVDLNRQGTPLIEIVSEADMRSPEEAYAYLEALRSIIQFTEVSDVKMEEGSMRCDANISLRPYGQEEFGTKAELKNLNSMNFVKKGLAYEEKRQAKVLLSGGEIQQETRRFDEATSTTLLMRVKEGSSDYRYFPEPDVPRFSIDDEWIEKVRASLPEMPASRRARYISELGLPEYDAMVLTLTKEMSDFFEATLANGADAKQASNWLMGEVSAYLNSEKVELADTKLTPENLAGMITLINDGTISSKIAKKVFKELIENGGDAKEVVEAKGLVQLSDPAQLLPMINEVLDNNQQSIDDFKNGKDRAVGFLVGQIMKATRGQANPGVVNKLLQEELSKR.

It belongs to the GatB/GatE family. GatB subfamily. Heterotrimer of A, B and C subunits.

The enzyme catalyses L-glutamyl-tRNA(Gln) + L-glutamine + ATP + H2O = L-glutaminyl-tRNA(Gln) + L-glutamate + ADP + phosphate + H(+). It carries out the reaction L-aspartyl-tRNA(Asn) + L-glutamine + ATP + H2O = L-asparaginyl-tRNA(Asn) + L-glutamate + ADP + phosphate + 2 H(+). Allows the formation of correctly charged Asn-tRNA(Asn) or Gln-tRNA(Gln) through the transamidation of misacylated Asp-tRNA(Asn) or Glu-tRNA(Gln) in organisms which lack either or both of asparaginyl-tRNA or glutaminyl-tRNA synthetases. The reaction takes place in the presence of glutamine and ATP through an activated phospho-Asp-tRNA(Asn) or phospho-Glu-tRNA(Gln). This Enterococcus faecalis (strain ATCC 700802 / V583) protein is Aspartyl/glutamyl-tRNA(Asn/Gln) amidotransferase subunit B.